Consider the following 251-residue polypeptide: Myozenin-3 (251 aa).

Position 31 is a phosphoserine (serine 31). Positions 50 to 67 (LLFQKRQRRVQKFTFELA) are binding to ACTN2, PPP3CA and TCAP. A binding to FLNC region spans residues 67 to 110 (AASQRAMLAGSARRKVTGTAESGTVANANGPEGPNYRSELHIFP). Positions 79 to 102 (RRKVTGTAESGTVANANGPEGPNY) are disordered. Residues 186–207 (PSPNDYRNFNKTPVPFGGPLVG) are binding to ACTN2.

It belongs to the myozenin family. Interacts with ACTN2, LDB3, FLNC, PPP3CA and TCAP. In terms of tissue distribution, expressed specifically in skeletal muscle. Not detected in heart.

The protein localises to the cytoplasm. The protein resides in the myofibril. It localises to the sarcomere. Its subcellular location is the z line. Functionally, myozenins may serve as intracellular binding proteins involved in linking Z line proteins such as alpha-actinin, gamma-filamin, TCAP/telethonin, LDB3/ZASP and localizing calcineurin signaling to the sarcomere. Plays an important role in the modulation of calcineurin signaling. May play a role in myofibrillogenesis. The sequence is that of Myozenin-3 from Homo sapiens (Human).